The sequence spans 135 residues: Basic phospholipase A2 10 (135 aa).

7 disulfides stabilise this stretch: C28-C87, C42-C134, C44-C60, C59-C115, C66-C108, C76-C101, and C94-C106. Residues Y43, G45, and G47 each contribute to the Ca(2+) site. H63 is a catalytic residue. D64 is a binding site for Ca(2+). D109 is an active-site residue.

Belongs to the phospholipase A2 family. Group I subfamily. D49 sub-subfamily. Requires Ca(2+) as cofactor. Expressed by the venom gland.

The protein resides in the secreted. It catalyses the reaction a 1,2-diacyl-sn-glycero-3-phosphocholine + H2O = a 1-acyl-sn-glycero-3-phosphocholine + a fatty acid + H(+). Functionally, snake venom phospholipase A2 (PLA2) that inhibits neuromuscular transmission by blocking acetylcholine release from the nerve termini. PLA2 catalyzes the calcium-dependent hydrolysis of the 2-acyl groups in 3-sn-phosphoglycerides. This chain is Basic phospholipase A2 10, found in Bungarus fasciatus (Banded krait).